The chain runs to 300 residues: Cyclic nucleotide synthase CdnE01 (300 aa).

3 residues coordinate Mg(2+): aspartate 63, aspartate 65, and aspartate 137.

The protein belongs to the CD-NTase family. E01 subfamily. The cofactor is Mg(2+).

Binds to and probably activated by a virus-derived, approximately 400 nucleotide RNA (called CBASS-activating bacteriophage RNA, cabRNA) that begins in the viral terminase subunit terS and extends into terL, as well as by a shorter RNA with part of the cabRNA sequence able to form a hairpin. RNA secondary and/or tertiary structure, as well as viral infection itself, are important for CdnE activation. Its function is as follows. Cyclic nucleotide synthase (second messenger synthase) of a CBASS antivirus system. CBASS (cyclic oligonucleotide-based antiphage signaling system) provides immunity against bacteriophage. The CD-NTase protein synthesizes cyclic nucleotides in response to infection; these serve as specific second messenger signals. The signals activate a diverse range of effectors, leading to bacterial cell death and thus abortive phage infection. A type I-B CBASS system. Protects S.aureus against phage infection. When the CBASS operon (cdnE and the following gene) is introduced in S.aureus strain RN4220 there is strong protection against lytic DNA phages 80alpha-vir and phi-NM1-gamma-6 but little to no protection against phages phi-NM4-gamma-4 or phi-12-gamma-3. This is Cyclic nucleotide synthase CdnE01 from Staphylococcus haemolyticus.